A 239-amino-acid polypeptide reads, in one-letter code: Phosphoribosylaminoimidazole-succinocarboxamide synthase (239 aa).

It belongs to the SAICAR synthetase family.

It carries out the reaction 5-amino-1-(5-phospho-D-ribosyl)imidazole-4-carboxylate + L-aspartate + ATP = (2S)-2-[5-amino-1-(5-phospho-beta-D-ribosyl)imidazole-4-carboxamido]succinate + ADP + phosphate + 2 H(+). Its pathway is purine metabolism; IMP biosynthesis via de novo pathway; 5-amino-1-(5-phospho-D-ribosyl)imidazole-4-carboxamide from 5-amino-1-(5-phospho-D-ribosyl)imidazole-4-carboxylate: step 1/2. The polypeptide is Phosphoribosylaminoimidazole-succinocarboxamide synthase (Acinetobacter baumannii (strain AB307-0294)).